A 492-amino-acid chain; its full sequence is Ethanolamine-phosphate phospho-lyase (492 aa).

N6-(pyridoxal phosphate)lysine is present on K280. The disordered stretch occupies residues A462–N492.

The protein belongs to the class-III pyridoxal-phosphate-dependent aminotransferase family. In terms of assembly, homotetramer. Pyridoxal 5'-phosphate serves as cofactor.

It localises to the mitochondrion. It carries out the reaction phosphoethanolamine + H2O = acetaldehyde + NH4(+) + phosphate. Catalyzes the pyridoxal-phosphate-dependent breakdown of phosphoethanolamine, converting it to ammonia, inorganic phosphate and acetaldehyde. In Danio rerio (Zebrafish), this protein is Ethanolamine-phosphate phospho-lyase (etnppl).